A 161-amino-acid chain; its full sequence is Protein-export protein SecB (161 aa).

This sequence belongs to the SecB family. In terms of assembly, homotetramer, a dimer of dimers. One homotetramer interacts with 1 SecA dimer.

The protein resides in the cytoplasm. One of the proteins required for the normal export of preproteins out of the cell cytoplasm. It is a molecular chaperone that binds to a subset of precursor proteins, maintaining them in a translocation-competent state. It also specifically binds to its receptor SecA. The protein is Protein-export protein SecB of Methylocella silvestris (strain DSM 15510 / CIP 108128 / LMG 27833 / NCIMB 13906 / BL2).